The chain runs to 319 residues: Annexin D4 (319 aa).

Annexin repeat units lie at residues 1 to 75 (MALP…EFSR) and 86 to 157 (HPWE…GLVS). Ca(2+) is bound by residues glycine 19, glycine 21, and glutamate 72. Position 115 is a phosphothreonine (threonine 115). Phosphotyrosine is present on residues tyrosine 159 and tyrosine 211. Annexin repeat units follow at residues 169 to 240 (DSAK…ICLL) and 241 to 316 (KPAL…TLLS). Serine 277 carries the post-translational modification Phosphoserine. Tyrosine 287 carries the phosphotyrosine modification.

The protein belongs to the annexin (TC 1.A.31.1) family. In terms of tissue distribution, expressed mainly in roots and flowers. Lower in stems and leaves.

In terms of biological role, may be involved in osmotic stress and abscisic acid signaling in a calcium-dependent manner. This is Annexin D4 (ANN4) from Arabidopsis thaliana (Mouse-ear cress).